Reading from the N-terminus, the 88-residue chain is LYR motif-containing protein 2 (88 aa).

A mitochondrion-targeting transit peptide spans 1–19 (MATSRLPPATLTLKQFMRR).

This sequence belongs to the complex I LYR family.

It is found in the mitochondrion. In terms of biological role, involved in efficient integration of the N-module into mitochondrial respiratory chain complex I. This chain is LYR motif-containing protein 2 (LYRM2), found in Bos taurus (Bovine).